The following is a 71-amino-acid chain: MNKPVKKQQPKKVIPNFEYARRLNGKKVKIFLRNGEVLDAEVTGVSNYEIMVKVGDRNLLVFKHAIDYIEY.

Residues 15–71 form the Sm domain; that stretch reads PNFEYARRLNGKKVKIFLRNGEVLDAEVTGVSNYEIMVKVGDRNLLVFKHAIDYIEY.

This is an uncharacterized protein from Methanocaldococcus jannaschii (strain ATCC 43067 / DSM 2661 / JAL-1 / JCM 10045 / NBRC 100440) (Methanococcus jannaschii).